We begin with the raw amino-acid sequence, 335 residues long: Glycerol-3-phosphate dehydrogenase [NAD(P)+] (335 aa).

Residues Ser-12, Trp-13, and Lys-107 each coordinate NADPH. The sn-glycerol 3-phosphate site is built by Lys-107, Gly-138, and Ser-140. An NADPH-binding site is contributed by Ala-142. Residues Lys-193, Asp-246, Ser-256, Arg-257, and Asn-258 each contribute to the sn-glycerol 3-phosphate site. Residue Lys-193 is the Proton acceptor of the active site. Position 257 (Arg-257) interacts with NADPH. Residues Val-281 and Glu-283 each contribute to the NADPH site.

It belongs to the NAD-dependent glycerol-3-phosphate dehydrogenase family.

Its subcellular location is the cytoplasm. The enzyme catalyses sn-glycerol 3-phosphate + NAD(+) = dihydroxyacetone phosphate + NADH + H(+). It catalyses the reaction sn-glycerol 3-phosphate + NADP(+) = dihydroxyacetone phosphate + NADPH + H(+). It functions in the pathway membrane lipid metabolism; glycerophospholipid metabolism. Catalyzes the reduction of the glycolytic intermediate dihydroxyacetone phosphate (DHAP) to sn-glycerol 3-phosphate (G3P), the key precursor for phospholipid synthesis. This is Glycerol-3-phosphate dehydrogenase [NAD(P)+] from Geobacter metallireducens (strain ATCC 53774 / DSM 7210 / GS-15).